The chain runs to 494 residues: Aspartyl/glutamyl-tRNA(Asn/Gln) amidotransferase subunit B (494 aa).

This sequence belongs to the GatB/GatE family. GatB subfamily. As to quaternary structure, heterotrimer of A, B and C subunits.

The catalysed reaction is L-glutamyl-tRNA(Gln) + L-glutamine + ATP + H2O = L-glutaminyl-tRNA(Gln) + L-glutamate + ADP + phosphate + H(+). The enzyme catalyses L-aspartyl-tRNA(Asn) + L-glutamine + ATP + H2O = L-asparaginyl-tRNA(Asn) + L-glutamate + ADP + phosphate + 2 H(+). In terms of biological role, allows the formation of correctly charged Asn-tRNA(Asn) or Gln-tRNA(Gln) through the transamidation of misacylated Asp-tRNA(Asn) or Glu-tRNA(Gln) in organisms which lack either or both of asparaginyl-tRNA or glutaminyl-tRNA synthetases. The reaction takes place in the presence of glutamine and ATP through an activated phospho-Asp-tRNA(Asn) or phospho-Glu-tRNA(Gln). This is Aspartyl/glutamyl-tRNA(Asn/Gln) amidotransferase subunit B from Synechococcus sp. (strain ATCC 27144 / PCC 6301 / SAUG 1402/1) (Anacystis nidulans).